The primary structure comprises 454 residues: Tyrosine aminotransferase (454 aa).

Met-1 bears the N-acetylmethionine mark. Position 280 is an N6-(pyridoxal phosphate)lysine (Lys-280). Residue Ser-448 is modified to Phosphoserine.

Belongs to the class-I pyridoxal-phosphate-dependent aminotransferase family. In terms of assembly, homodimer. The cofactor is pyridoxal 5'-phosphate.

The enzyme catalyses L-tyrosine + 2-oxoglutarate = 3-(4-hydroxyphenyl)pyruvate + L-glutamate. Its pathway is amino-acid degradation; L-phenylalanine degradation; acetoacetate and fumarate from L-phenylalanine: step 2/6. Functionally, transaminase involved in tyrosine breakdown. Converts tyrosine to p-hydroxyphenylpyruvate. Can catalyze the reverse reaction, using glutamic acid, with 2-oxoglutarate as cosubstrate (in vitro). Has much lower affinity and transaminase activity towards phenylalanine. This Homo sapiens (Human) protein is Tyrosine aminotransferase (TAT).